The primary structure comprises 364 residues: Chorismate synthase (364 aa).

Residue arginine 47 participates in NADP(+) binding. FMN contacts are provided by residues 125-127 (RAS), glycine 288, 303-307 (KPTAT), and arginine 329.

It belongs to the chorismate synthase family. As to quaternary structure, homotetramer. FMNH2 is required as a cofactor.

It catalyses the reaction 5-O-(1-carboxyvinyl)-3-phosphoshikimate = chorismate + phosphate. It functions in the pathway metabolic intermediate biosynthesis; chorismate biosynthesis; chorismate from D-erythrose 4-phosphate and phosphoenolpyruvate: step 7/7. Functionally, catalyzes the anti-1,4-elimination of the C-3 phosphate and the C-6 proR hydrogen from 5-enolpyruvylshikimate-3-phosphate (EPSP) to yield chorismate, which is the branch point compound that serves as the starting substrate for the three terminal pathways of aromatic amino acid biosynthesis. This reaction introduces a second double bond into the aromatic ring system. This Synechococcus sp. (strain CC9902) protein is Chorismate synthase.